We begin with the raw amino-acid sequence, 178 residues long: uncharacterized protein (178 aa).

This sequence belongs to the tail fiber family.

This is an uncharacterized protein from Escherichia coli (strain K12).